The primary structure comprises 304 residues: tRNA pseudouridine synthase B (304 aa).

Catalysis depends on Asp-38, which acts as the Nucleophile. Positions 227–302 (LPKVEIYKDF…RIFKLKKVFK (76 aa)) constitute a PUA domain.

It belongs to the pseudouridine synthase TruB family. Type 1 subfamily.

The catalysed reaction is uridine(55) in tRNA = pseudouridine(55) in tRNA. Responsible for synthesis of pseudouridine from uracil-55 in the psi GC loop of transfer RNAs. The chain is tRNA pseudouridine synthase B from Thermosipho melanesiensis (strain DSM 12029 / CIP 104789 / BI429).